We begin with the raw amino-acid sequence, 324 residues long: Zinc finger C2HC domain-containing protein 1A (324 aa).

The segment at 15-44 (ELLPCKICGRTFFPVALKKHGPICKKTATK) adopts a C2HC/C3H-type 1 zinc-finger fold. Zn(2+) contacts are provided by C19, C22, H34, and C38. The segment at 43 to 83 (TKKRKTFDSSRQRAEGTDIPTVKPLKPRPEPPKKPSNWRRK) is disordered. Over residues 48-58 (TFDSSRQRAEG) the composition is skewed to basic and acidic residues. The C2HC/C3H-type 2 zinc-finger motif lies at 118-147 (DYIQCPYCQRRFNENAADRHINFCKEQAAR). Positions 122, 125, 137, and 141 each coordinate Zn(2+). 2 disordered regions span residues 150–224 (NKGK…LSPS) and 236–259 (NVKPRNSTPPSLARNPAPGVLTNK). Low complexity-rich tracts occupy residues 176-187 (SNSPGTASSGSS) and 196-215 (GKTVVGVPSGKVSSSSSSLG). At S222 the chain carries Phosphoserine. T243 is subject to Phosphothreonine. Position 291 is a phosphoserine (S291).

This sequence belongs to the ZC2HC1 family. Requires Zn(2+) as cofactor.

The protein is Zinc finger C2HC domain-containing protein 1A (ZC2HC1A) of Pongo abelii (Sumatran orangutan).